A 484-amino-acid polypeptide reads, in one-letter code: Glutamyl-tRNA(Gln) amidotransferase subunit A (484 aa).

Residues Lys76 and Ser151 each act as charge relay system in the active site. Ser175 functions as the Acyl-ester intermediate in the catalytic mechanism.

This sequence belongs to the amidase family. GatA subfamily. In terms of assembly, heterotrimer of A, B and C subunits.

The enzyme catalyses L-glutamyl-tRNA(Gln) + L-glutamine + ATP + H2O = L-glutaminyl-tRNA(Gln) + L-glutamate + ADP + phosphate + H(+). Functionally, allows the formation of correctly charged Gln-tRNA(Gln) through the transamidation of misacylated Glu-tRNA(Gln) in organisms which lack glutaminyl-tRNA synthetase. The reaction takes place in the presence of glutamine and ATP through an activated gamma-phospho-Glu-tRNA(Gln). This is Glutamyl-tRNA(Gln) amidotransferase subunit A from Halorhodospira halophila (strain DSM 244 / SL1) (Ectothiorhodospira halophila (strain DSM 244 / SL1)).